The sequence spans 562 residues: NAD-dependent malic enzyme (562 aa).

The active-site Proton donor is Y101. Residue R154 participates in NAD(+) binding. K172 functions as the Proton acceptor in the catalytic mechanism. 3 residues coordinate a divalent metal cation: E243, D244, and D267. Residues D267 and N415 each contribute to the NAD(+) site.

The protein belongs to the malic enzymes family. As to quaternary structure, homotetramer. Mg(2+) serves as cofactor. The cofactor is Mn(2+).

The catalysed reaction is (S)-malate + NAD(+) = pyruvate + CO2 + NADH. The enzyme catalyses oxaloacetate + H(+) = pyruvate + CO2. The sequence is that of NAD-dependent malic enzyme from Shewanella sp. (strain MR-4).